Consider the following 327-residue polypeptide: Putative pumilio homolog 19 (327 aa).

The PUM-HD domain occupies 1–324 (MAVSDNTFSM…NIANILDTFR (324 aa)). 6 Pumilio repeats span residues 79 to 114 (SDSDYFMSIVTTKFGSRRVQKLLGKSDDVDAFFCAA), 115 to 149 (ILRRFLHITTDKYASYVTIRAMVVFDKVMKKALYE), 150 to 185 (RILYHALDLACDQHGCIALNDIITDADDPYYRDQLL), 186 to 222 (ELVVSNALRLSNDASGNFVVQHVLTLYDSRCIHNIAV), 223 to 260 (NLYGQCIELSFKKYGSYIVEKLLEVEESMVVVVVELLG), and 261 to 295 (CDGDRLMRLARNEFGNFVVVKALRFTKEMRMDLFW).

It is found in the cytoplasm. Its function is as follows. Sequence-specific RNA-binding protein that regulates translation and mRNA stability by binding the 3'-UTR of target mRNAs. This is Putative pumilio homolog 19 (APUM19) from Arabidopsis thaliana (Mouse-ear cress).